Here is a 436-residue protein sequence, read N- to C-terminus: MHIAVVGLSHRTAPVEIREKLSIPEQTMETSLQTLRGNDQILEVSILSTCNRLEIYTLVRHPERGISAISDFLGQHSGLATEDLSPHLFNFHHDEAVAHLMRVAAGLDSLVLGEGQILSQVKKMVRLGQEHKSMGPILNRLLTQAVSTGKRVRSETNLGTGAVSISSAAVELAQLKLGQAQGEDQLMTLESELVAVVGAGRMSRLLLQHLQAKGCSGVMLLNRTRQRAEDLSADFPELPVECRPLDDLNHCLSTCSLVFTSTAADDPIVDASLLKQLKRRSFLRLIDIGVPRNIASDVVDVPGVESHDVDDLHEVVSRNQEARQQMAKEAEVVLQEETRLFLEWWDSLEAVPTINRLRATLEAIRAEELQKALSRMGPDFSARERKVVEALSKGIINKILHTPVTQLRAPQARPERQQALRVVASLFELDPPLENG.

Substrate is bound by residues T49–R52, S109, E114–Q116, and Q120. C50 acts as the Nucleophile in catalysis. Position 198–203 (G198–S203) interacts with NADP(+).

The protein belongs to the glutamyl-tRNA reductase family. Homodimer.

The catalysed reaction is (S)-4-amino-5-oxopentanoate + tRNA(Glu) + NADP(+) = L-glutamyl-tRNA(Glu) + NADPH + H(+). The protein operates within porphyrin-containing compound metabolism; protoporphyrin-IX biosynthesis; 5-aminolevulinate from L-glutamyl-tRNA(Glu): step 1/2. It participates in porphyrin-containing compound metabolism; chlorophyll biosynthesis. In terms of biological role, catalyzes the NADPH-dependent reduction of glutamyl-tRNA(Glu) to glutamate 1-semialdehyde (GSA). The protein is Glutamyl-tRNA reductase of Prochlorococcus marinus (strain MIT 9313).